Here is a 258-residue protein sequence, read N- to C-terminus: Imidazole glycerol phosphate synthase subunit HisF (258 aa).

Residues aspartate 11 and aspartate 130 contribute to the active site.

It belongs to the HisA/HisF family. In terms of assembly, heterodimer of HisH and HisF.

The protein localises to the cytoplasm. It catalyses the reaction 5-[(5-phospho-1-deoxy-D-ribulos-1-ylimino)methylamino]-1-(5-phospho-beta-D-ribosyl)imidazole-4-carboxamide + L-glutamine = D-erythro-1-(imidazol-4-yl)glycerol 3-phosphate + 5-amino-1-(5-phospho-beta-D-ribosyl)imidazole-4-carboxamide + L-glutamate + H(+). It functions in the pathway amino-acid biosynthesis; L-histidine biosynthesis; L-histidine from 5-phospho-alpha-D-ribose 1-diphosphate: step 5/9. In terms of biological role, IGPS catalyzes the conversion of PRFAR and glutamine to IGP, AICAR and glutamate. The HisF subunit catalyzes the cyclization activity that produces IGP and AICAR from PRFAR using the ammonia provided by the HisH subunit. This chain is Imidazole glycerol phosphate synthase subunit HisF, found in Sodalis glossinidius (strain morsitans).